The chain runs to 428 residues: Flotillin-2 (428 aa).

Gly-2 is lipidated: N-myristoyl glycine. The S-palmitoyl cysteine; by ZDHHC5 moiety is linked to residue Cys-4. A lipid anchor (S-palmitoyl cysteine) is attached at Cys-19. Cys-20 carries S-palmitoyl cysteine; by ZDHHC5 lipidation. The residue at position 405 (Ser-405) is a Phosphoserine.

The protein belongs to the band 7/mec-2 family. Flotillin subfamily. Heterooligomeric complex of flotillin-1 and flotillin-2 and caveolin-1 and caveolin-2. Interacts with ECPAS. In terms of processing, ZDHHC5-catalyzed palmitoylation may be required for the formation of higher-order complexes and for neurite outgrowth in cultured neural stem cells. As to expression, expressed in many tissues, including suprabasal epidermis, hair follicles, heart, lung, thymus, spleen, liver, kidney and brain. Not expressed in skeletal muscle.

The protein localises to the cell membrane. Its subcellular location is the membrane. It localises to the caveola. The protein resides in the endosome. Its function is as follows. May act as a scaffolding protein within caveolar membranes, functionally participating in formation of caveolae or caveolae-like vesicles. May be involved in epidermal cell adhesion and epidermal structure and function. This chain is Flotillin-2 (Flot2), found in Mus musculus (Mouse).